Here is a 579-residue protein sequence, read N- to C-terminus: Vitamin B6 transporter TPN1 (579 aa).

The Cytoplasmic portion of the chain corresponds to 1-98 (MNRDNMDTTK…LHVAGLWLSA (98 aa)). Residues 99–119 (TGGLSSMSSFLLGPLLFGLSF) form a helical membrane-spanning segment. The Extracellular portion of the chain corresponds to 120–122 (RES). The chain crosses the membrane as a helical span at residues 123-143 (VASSLISVTIGCLIAAYCSIM). The Cytoplasmic portion of the chain corresponds to 144–157 (GPQSGCRQMVTARY). The chain crosses the membrane as a helical span at residues 158 to 178 (LFGWWFVKLVALASIIGVMGW). Residues 179-198 (SVVNSVVGGEMLAAISNDKV) lie on the Extracellular side of the membrane. A helical membrane pass occupies residues 199–219 (PLWVGIVIVTVCSFLVAIFGI). Residues 220–221 (KQ) lie on the Cytoplasmic side of the membrane. Residues 222-242 (VIKVETYLSVPVLTAFLLLYI) traverse the membrane as a helical segment. Topologically, residues 243–274 (SSSDKYSFVNAYVSKGNLDSSTRKGNWMSFFS) are extracellular. Residues 275 to 295 (LCYSITATWGSITADYYILFP) traverse the membrane as a helical segment. The Cytoplasmic portion of the chain corresponds to 296 to 302 (EDTPYIQ). The helical transmembrane segment at 303 to 323 (IFCLTFFGTFLPTCFVGILGL) threads the bilayer. Topologically, residues 324–362 (LLASVAMSYKPWSVEYDSHGMGGLLWAGFQRWNGFGKFC) are extracellular. The helical transmembrane segment at 363-383 (VVVLVFSLVSNNIINTYSAAF) threads the bilayer. Residues 384 to 394 (SIQLSSVFCAK) lie on the Cytoplasmic side of the membrane. Residues 395 to 415 (IPRWFWSIVCTIICLVCALIG) traverse the membrane as a helical segment. Residues 416-421 (RNHFST) are Extracellular-facing. Residues 422 to 442 (ILGNFLPMIGYWISMYFILLF) form a helical membrane-spanning segment. The Cytoplasmic segment spans residues 443–519 (EENLVFRRFF…EVLTHGYAAT (77 aa)). The helical transmembrane segment at 520–540 (FAFIVGVAGVVVGMAQAYWIG) threads the bilayer. Topologically, residues 541–545 (PIAAK) are extracellular. A helical membrane pass occupies residues 546 to 566 (FGEYGGDVAMWLSMAFSGVVY). The Cytoplasmic portion of the chain corresponds to 567-579 (PPCRYLELRKFGR).

The protein belongs to the purine-cytosine permease (2.A.39) family.

It is found in the membrane. Its function is as follows. Thiamine-regulated, high affinity import carrier of pyridoxine, pyridoxal and pyridoxamine. The sequence is that of Vitamin B6 transporter TPN1 (TPN1) from Saccharomyces cerevisiae (strain ATCC 204508 / S288c) (Baker's yeast).